A 369-amino-acid polypeptide reads, in one-letter code: Chaperone protein DnaJ (369 aa).

The J domain occupies 7 to 73 (DYYEILGVPR…QKRAMYDRFG (67 aa)). Residues 143-225 (GAEIPVEYER…CGGSGRVLRK (83 aa)) form a CR-type zinc finger. The Zn(2+) site is built by Cys-156, Cys-159, Cys-173, Cys-176, Cys-199, Cys-202, Cys-213, and Cys-216. CXXCXGXG motif repeat units follow at residues 156–163 (CPRCGGTG), 173–180 (CPSCGGTG), 199–206 (CERCGGTG), and 213–220 (CHECGGSG).

It belongs to the DnaJ family. Homodimer. It depends on Zn(2+) as a cofactor.

It is found in the cytoplasm. Functionally, participates actively in the response to hyperosmotic and heat shock by preventing the aggregation of stress-denatured proteins and by disaggregating proteins, also in an autonomous, DnaK-independent fashion. Unfolded proteins bind initially to DnaJ; upon interaction with the DnaJ-bound protein, DnaK hydrolyzes its bound ATP, resulting in the formation of a stable complex. GrpE releases ADP from DnaK; ATP binding to DnaK triggers the release of the substrate protein, thus completing the reaction cycle. Several rounds of ATP-dependent interactions between DnaJ, DnaK and GrpE are required for fully efficient folding. Also involved, together with DnaK and GrpE, in the DNA replication of plasmids through activation of initiation proteins. The chain is Chaperone protein DnaJ from Thermotoga petrophila (strain ATCC BAA-488 / DSM 13995 / JCM 10881 / RKU-1).